The following is a 1005-amino-acid chain: MTLKMFLPVNLVSVCMKLNNSVVMVGLYYGFISAFSIGSSYLFLLRPRFLNDDPDAIEKKASETAGFFTGQLLIFISILYGPLHLALGRPHTILLLLAPYFFFHFLSSNSGQYPSQRFAFPLLTKSMRNRSFQLVFLHSLLFQLFSLSVLGRPMLTRLSYIYIFRSNNKMLFVLSSFVGWLIGHILVLKWAGLVFVWLLKFIRSKTMKYITCNVLIPATKYIIEKWRNSFVAGLIREILAMKQVESALVRIKNSRLLDDVRWWIRGSGLISGLKINIRFYARLILRGFENVYVGAKFRQDMEHLFSIILFAFFLLYLDRTPLLYADPADKKLQLQRKLSNETQAAREEKELEERLTEKFEAQRRAQRAAQRKALQEFKQGVVESYLANQAAKDENQIQAQKDEKQIQAEKKATIRAEQVVQYTFGLIEAQRREMEIEAARAMQEAYKGMLAAEEEDVEEGVQEKQEGFPEEPISPSEEREENPKLLILKEKISILTEKISILTEKNDLFSFEIPIITSLFDPQKPLRPLRYIKTCAGVEKAVKNEMSQYFFYPCRSDGKQRLCFTYPPSLATFWEMIQRKMASRFPRIYTKAKWRALRGSAPGSYRQWISRNKKKKNSLSTEFQNRIQTLDQKKSLLNVLARRKRSSLQNVLETRKRLCNYKTKKEYLPEIADPFLTGALRGKSDPEVYDGVRKTSEIKVVFLKNNITMATLGNKNDDDLREEKNAISLLSRMKNPVNKLHLLFVNERDYPFVKPLVNRINGPAVPKKKKTISKSKQNEIKSKQKKVKSKQKKVKSKQKKVKSKQKKVKSKQNEIKSKQNEIKSKQKKVKRKQNEIKSKLNEVKRKQNEIYPKGVKFNATPKTEINPHGIRFDAATIEKYSFATGYSYRPPSFHDIIFKAFVTEPQRNKKKVIELEEEINKQVPRWSYQLIDELEQLEGAEGETQFSDHEIRILPFKRVSVFTEKEAKKKPLIDEEGNYVRHKKTYAVRFLGHMSDFRRGLIKGS.

6 helical membrane passes run 25-45, 67-87, 91-111, 131-151, 177-197, and 304-324; these read VGLY…LFLL, FFTG…HLAL, HTIL…SNSG, SFQL…SVLG, FVGW…VFVW, and LFSI…PLLY. 2 disordered regions span residues 457 to 481 and 767 to 833; these read VEEG…EREE and KKKK…KRKQ. Residues 783–810 are compositionally biased toward basic residues; that stretch reads KQKKVKSKQKKVKSKQKKVKSKQKKVKS. Residues 811-824 are compositionally biased toward basic and acidic residues; it reads KQNEIKSKQNEIKS.

The protein belongs to the TIC214 family. Part of the Tic complex.

Its subcellular location is the plastid. The protein resides in the chloroplast inner membrane. In terms of biological role, involved in protein precursor import into chloroplasts. May be part of an intermediate translocation complex acting as a protein-conducting channel at the inner envelope. The polypeptide is Protein TIC 214 (Oenothera berteroana (Bertero's evening primrose)).